Reading from the N-terminus, the 361-residue chain is S-adenosylmethionine:tRNA ribosyltransferase-isomerase (361 aa).

This sequence belongs to the QueA family. As to quaternary structure, monomer.

The protein localises to the cytoplasm. It catalyses the reaction 7-aminomethyl-7-carbaguanosine(34) in tRNA + S-adenosyl-L-methionine = epoxyqueuosine(34) in tRNA + adenine + L-methionine + 2 H(+). The protein operates within tRNA modification; tRNA-queuosine biosynthesis. In terms of biological role, transfers and isomerizes the ribose moiety from AdoMet to the 7-aminomethyl group of 7-deazaguanine (preQ1-tRNA) to give epoxyqueuosine (oQ-tRNA). The sequence is that of S-adenosylmethionine:tRNA ribosyltransferase-isomerase from Actinobacillus pleuropneumoniae serotype 5b (strain L20).